The primary structure comprises 317 residues: Ribonuclease Z (317 aa).

7 residues coordinate Zn(2+): histidine 62, histidine 64, aspartate 66, histidine 67, histidine 139, aspartate 210, and histidine 268. The Proton acceptor role is filled by aspartate 66.

This sequence belongs to the RNase Z family. As to quaternary structure, homodimer. The cofactor is Zn(2+).

The catalysed reaction is Endonucleolytic cleavage of RNA, removing extra 3' nucleotides from tRNA precursor, generating 3' termini of tRNAs. A 3'-hydroxy group is left at the tRNA terminus and a 5'-phosphoryl group is left at the trailer molecule.. In terms of biological role, zinc phosphodiesterase, which displays some tRNA 3'-processing endonuclease activity. Probably involved in tRNA maturation, by removing a 3'-trailer from precursor tRNA. This Picosynechococcus sp. (strain ATCC 27264 / PCC 7002 / PR-6) (Agmenellum quadruplicatum) protein is Ribonuclease Z.